The following is a 1180-amino-acid chain: MSDVAETLDPLRLPLQGERLIEASAGTGKTFTIAALYLRLLLGLGGSAAFPRPLTVEELLVVTFTEAATAELRGRIRSNIHELRIACLRETTDNPLYERLLEEIDDKAQAAQWLLLAERQMDEAAVFTIHGFCQRMLNLNAFESGMLFEQQLIEDESLLRYQACADFWRRHCYPLPREIAQVVFETWKGPQALLRDINRYLQGEAPVIKAPPPDDETLASRHAQIVARIDTVKQQWRDAVGELDALIESSGIDRRKFNRSNQAKWIDKISAWAEEETNSYQLPESLEKFSQRFLEDRTKAGGETPRHPLFEAIDQLLAEPLSIRDLVITRALAEIRETVAREKRRRGELGFDDMLSRLDSALRSESGEVLAAAIRTRFPVAMIDEFQDTDPQQYRIFRRIWHHQPETALLLIGDPKQAIYAFRGADIFTYMKARSEVHAHYTLDTNWRSAPGMVNSVNKLFSQTDDAFMFREIPFIPVKSAGKNQALRFVFKGETQPAMKMWLMEGESCGVGDYQSTMAQVCAAQIRDWLQAGQRGEALLMNGDDARPVRASDISVLVRSRQEAAQVRDALTLLEIPSVYLSNRDSVFETLEAQEMLWLLQAVMTPERENTLRSALATSMMGLNALDIETLNNDEHAWDVVVEEFDGYRQIWRKRGVMPMLRALMSARNIAENLLATAGGERRLTDILHISELLQEAGTQLESEHALVRWLSQHILEPDSNASSQQMRLESDKHLVQIVTIHKSKGLEYPLVWLPFITNFRVQEQAFYHDRHSFEAVLDLNAAPESVDLAEAERLAEDLRLLYVALTRSVWHCSLGVAPLVRRRGDKKGDTDVHQSALGRLLQKGEPQDAAGLRTCIEALCDDDIAWQTAQTGDNQPWQVNDVSTAELNAKTLQRLPGDNWRVTSYSGLQQRGHGIAQDLMPRLDVDAAGVASVVEEPTLTPHQFPRGASPGTFLHSLFEDLDFTQPVDPNWVREKLELGGFESQWEPVLTEWITAVLQAPLNETGVSLSQLSARNKQVEMEFYLPISEPLIASQLDTLIRQFDPLSAGCPPLEFMQVRGMLKGFIDLVFRHEGRYYLLDYKSNWLGEDSSAYTQQAMAAAMQAHRYDLQYQLYTLALHRYLRHRIADYDYEHHFGGVIYLFLRGVDKEHPQQGIYTTRPNAGLIALMDEMFAGMTLEEA.

The 449-residue stretch at 2–450 (SDVAETLDPL…YTLDTNWRSA (449 aa)) folds into the UvrD-like helicase ATP-binding domain. The ATPase, DNA-binding and helicase activity, interacts with RecC stretch occupies residues 2 to 853 (SDVAETLDPL…KGEPQDAAGL (852 aa)). 23 to 30 (ASAGTGKT) contributes to the ATP binding site. Residues 252–254 (IDR) mediate DNA binding. An ATP-binding site is contributed by Trp-447. Residues 480 to 746 (SAGKNQALRF…QIVTIHKSKG (267 aa)) enclose the UvrD-like helicase C-terminal domain. 3 DNA-binding regions span residues 511–512 (VG), 560–561 (SR), and Arg-761. A nuclease activity, interacts with RecD and RecA region spans residues 900–1180 (NWRVTSYSGL…MFAGMTLEEA (281 aa)). His-956, Asp-1067, Asp-1080, and Tyr-1081 together coordinate Mg(2+). Asp-1080 serves as the catalytic For nuclease activity.

This sequence belongs to the helicase family. UvrD subfamily. In terms of assembly, heterotrimer of RecB, RecC and RecD. All subunits contribute to DNA-binding. The C-terminus interacts with RecA. Interacts with YgbT (Cas1). (Microbial infection) Lambda virus GamS protein interacts with the enzyme without displacing any of the subunits. Requires Mg(2+) as cofactor.

The enzyme catalyses Exonucleolytic cleavage (in the presence of ATP) in either 5'- to 3'- or 3'- to 5'-direction to yield 5'-phosphooligonucleotides.. It carries out the reaction Couples ATP hydrolysis with the unwinding of duplex DNA by translocating in the 3'-5' direction.. The catalysed reaction is ATP + H2O = ADP + phosphate + H(+). With respect to regulation, after reacting with DNA bearing a Chi site the holoenzyme is disassembled and loses exonuclease activity, DNA unwinding and Chi-directed DNA cleavage; RecB remains complexed with ssDNA, which may prevent holoenzyme reassembly. High levels of Mg(2+) (13 mM MgCl(2+)) or incubation with DNase allows holoenzyme reassembly, suggesting it is DNA bound to RecB that prevents reassembly. Its activity is regulated as follows. (Microbial infection) RecBCD is inhibited by the lambda virus gam protein (both GamL and GamS isoforms); in vitro a short preincubation prior to adding DNA results in maximal inhibition. In terms of biological role, a helicase/nuclease that prepares dsDNA breaks (DSB) for recombinational DNA repair. Binds to DSBs and unwinds DNA via a rapid (&gt;1 kb/second) and highly processive (&gt;30 kb) ATP-dependent bidirectional helicase. Unwinds dsDNA until it encounters a Chi (crossover hotspot instigator, 5'-GCTGGTGG-3') sequence from the 3' direction. Cuts ssDNA a few nucleotides 3' to Chi site, by nicking one strand or switching the strand degraded (depending on the reaction conditions). The properties and activities of the enzyme are changed at Chi. The Chi-altered holoenzyme produces a long 3'-ssDNA overhang which facilitates RecA-binding to the ssDNA for homologous DNA recombination and repair. Holoenzyme degrades any linearized DNA that is unable to undergo homologous recombination. In the holoenzyme this subunit contributes ATPase, 3'-5' helicase, exonuclease activity and loads RecA onto ssDNA. The RecBC complex requires the RecD subunit for nuclease activity, but can translocate along ssDNA in both directions. The RecBCD complex does not unwind G-quadruplex DNA. Probably interacts with a component of retron Ec48 which moniters RecBCD stability; when RecB is missing or impaired the retron is activated and becomes toxic. In Escherichia coli (strain K12), this protein is RecBCD enzyme subunit RecB.